We begin with the raw amino-acid sequence, 1083 residues long: Error-prone DNA polymerase (1083 aa).

The protein belongs to the DNA polymerase type-C family. DnaE2 subfamily.

It is found in the cytoplasm. The catalysed reaction is DNA(n) + a 2'-deoxyribonucleoside 5'-triphosphate = DNA(n+1) + diphosphate. Its function is as follows. DNA polymerase involved in damage-induced mutagenesis and translesion synthesis (TLS). It is not the major replicative DNA polymerase. The chain is Error-prone DNA polymerase from Xanthomonas oryzae pv. oryzae (strain KACC10331 / KXO85).